A 451-amino-acid polypeptide reads, in one-letter code: Phosphoglucosamine mutase (451 aa).

S102 functions as the Phosphoserine intermediate in the catalytic mechanism. Positions 102, 243, 245, and 247 each coordinate Mg(2+). Position 102 is a phosphoserine (S102).

This sequence belongs to the phosphohexose mutase family. Mg(2+) serves as cofactor. In terms of processing, activated by phosphorylation.

It catalyses the reaction alpha-D-glucosamine 1-phosphate = D-glucosamine 6-phosphate. In terms of biological role, catalyzes the conversion of glucosamine-6-phosphate to glucosamine-1-phosphate. This is Phosphoglucosamine mutase from Brucella anthropi (strain ATCC 49188 / DSM 6882 / CCUG 24695 / JCM 21032 / LMG 3331 / NBRC 15819 / NCTC 12168 / Alc 37) (Ochrobactrum anthropi).